Here is a 350-residue protein sequence, read N- to C-terminus: Beta-hexosaminidase (350 aa).

Substrate is bound by residues Asp62, Arg70, Arg133, and 163-164; that span reads KH. The active-site Proton donor/acceptor is His176. The active-site Nucleophile is Asp248.

Belongs to the glycosyl hydrolase 3 family. NagZ subfamily.

Its subcellular location is the cytoplasm. It catalyses the reaction Hydrolysis of terminal non-reducing N-acetyl-D-hexosamine residues in N-acetyl-beta-D-hexosaminides.. It functions in the pathway cell wall biogenesis; peptidoglycan recycling. Its function is as follows. Plays a role in peptidoglycan recycling by cleaving the terminal beta-1,4-linked N-acetylglucosamine (GlcNAc) from peptide-linked peptidoglycan fragments, giving rise to free GlcNAc, anhydro-N-acetylmuramic acid and anhydro-N-acetylmuramic acid-linked peptides. The chain is Beta-hexosaminidase from Haemophilus influenzae (strain PittEE).